The sequence spans 519 residues: Cobyric acid synthase (519 aa).

The 183-residue stretch at 256–438 folds into the GATase cobBQ-type domain; the sequence is WLRVAVPRLP…WHGLFENDAF (183 aa). Catalysis depends on Cys-337, which acts as the Nucleophile. The active site involves His-430.

The protein belongs to the CobB/CobQ family. CobQ subfamily.

It functions in the pathway cofactor biosynthesis; adenosylcobalamin biosynthesis. Catalyzes amidations at positions B, D, E, and G on adenosylcobyrinic A,C-diamide. NH(2) groups are provided by glutamine, and one molecule of ATP is hydrogenolyzed for each amidation. This Saccharopolyspora erythraea (strain ATCC 11635 / DSM 40517 / JCM 4748 / NBRC 13426 / NCIMB 8594 / NRRL 2338) protein is Cobyric acid synthase.